A 654-amino-acid chain; its full sequence is Probable Xaa-Pro aminopeptidase P (654 aa).

4 residues coordinate Mn(2+): D449, D460, E558, and E572.

The protein belongs to the peptidase M24B family. Mn(2+) serves as cofactor.

It carries out the reaction Release of any N-terminal amino acid, including proline, that is linked to proline, even from a dipeptide or tripeptide.. Catalyzes the removal of a penultimate prolyl residue from the N-termini of peptides. This chain is Probable Xaa-Pro aminopeptidase P (ampp), found in Aspergillus flavus (strain ATCC 200026 / FGSC A1120 / IAM 13836 / NRRL 3357 / JCM 12722 / SRRC 167).